We begin with the raw amino-acid sequence, 168 residues long: Phosphopantetheine adenylyltransferase (168 aa).

A substrate-binding site is contributed by T9. ATP-binding positions include 9-10 (TF) and H17. Residues K41, L74, and R88 each coordinate substrate. ATP is bound by residues 89-91 (GLR), E99, and 124-130 (LQPIASR).

The protein belongs to the bacterial CoaD family. As to quaternary structure, homohexamer. Mg(2+) is required as a cofactor.

The protein localises to the cytoplasm. It carries out the reaction (R)-4'-phosphopantetheine + ATP + H(+) = 3'-dephospho-CoA + diphosphate. The protein operates within cofactor biosynthesis; coenzyme A biosynthesis; CoA from (R)-pantothenate: step 4/5. Functionally, reversibly transfers an adenylyl group from ATP to 4'-phosphopantetheine, yielding dephospho-CoA (dPCoA) and pyrophosphate. The protein is Phosphopantetheine adenylyltransferase of Sphingopyxis alaskensis (strain DSM 13593 / LMG 18877 / RB2256) (Sphingomonas alaskensis).